Here is a 122-residue protein sequence, read N- to C-terminus: Large ribosomal subunit protein uL14 (122 aa).

The protein belongs to the universal ribosomal protein uL14 family. In terms of assembly, part of the 50S ribosomal subunit. Forms a cluster with proteins L3 and L19. In the 70S ribosome, L14 and L19 interact and together make contacts with the 16S rRNA in bridges B5 and B8.

Binds to 23S rRNA. Forms part of two intersubunit bridges in the 70S ribosome. This chain is Large ribosomal subunit protein uL14, found in Macrococcus caseolyticus (strain JCSC5402) (Macrococcoides caseolyticum).